The primary structure comprises 299 residues: 4-diphosphocytidyl-2-C-methyl-D-erythritol kinase (299 aa).

Lys-20 is an active-site residue. Residue Pro-106–Ser-116 coordinates ATP. Asp-148 is a catalytic residue.

The protein belongs to the GHMP kinase family. IspE subfamily. In terms of assembly, homodimer.

It catalyses the reaction 4-CDP-2-C-methyl-D-erythritol + ATP = 4-CDP-2-C-methyl-D-erythritol 2-phosphate + ADP + H(+). Its pathway is isoprenoid biosynthesis; isopentenyl diphosphate biosynthesis via DXP pathway; isopentenyl diphosphate from 1-deoxy-D-xylulose 5-phosphate: step 3/6. Catalyzes the phosphorylation of the position 2 hydroxy group of 4-diphosphocytidyl-2C-methyl-D-erythritol. This is 4-diphosphocytidyl-2-C-methyl-D-erythritol kinase from Yersinia pseudotuberculosis serotype O:1b (strain IP 31758).